We begin with the raw amino-acid sequence, 156 residues long: Small ribosomal subunit protein uS7 (156 aa).

Belongs to the universal ribosomal protein uS7 family. As to quaternary structure, part of the 30S ribosomal subunit. Contacts proteins S9 and S11.

One of the primary rRNA binding proteins, it binds directly to 16S rRNA where it nucleates assembly of the head domain of the 30S subunit. Is located at the subunit interface close to the decoding center, probably blocks exit of the E-site tRNA. The polypeptide is Small ribosomal subunit protein uS7 (Vibrio vulnificus (strain CMCP6)).